The sequence spans 131 residues: Small ribosomal subunit protein uS8 (131 aa).

The protein belongs to the universal ribosomal protein uS8 family. Part of the 30S ribosomal subunit. Contacts proteins S5 and S12.

Its function is as follows. One of the primary rRNA binding proteins, it binds directly to 16S rRNA central domain where it helps coordinate assembly of the platform of the 30S subunit. In Aromatoleum aromaticum (strain DSM 19018 / LMG 30748 / EbN1) (Azoarcus sp. (strain EbN1)), this protein is Small ribosomal subunit protein uS8.